Here is a 73-residue protein sequence, read N- to C-terminus: Putative neurotoxin NaH-Cpp1a (73 aa).

A signal peptide spans 1–23 (MKSFYGILCVAVLMMFHLEMSES). 3 disulfide bridges follow: Cys-43–Cys-58, Cys-50–Cys-63, and Cys-57–Cys-70.

In terms of tissue distribution, expressed outside of acontia.

It localises to the secreted. The protein resides in the nematocyst. Its function is as follows. Putative neurotoxin. The protein is Putative neurotoxin NaH-Cpp1a of Calliactis polypus (Hermit crab anemone).